A 780-amino-acid polypeptide reads, in one-letter code: MATSNLLKNKGSLQFEDKWDFMRPIVLKLLRQESVTKQQWFDLFSDVHAVCLWDDKGPAKIHQALKEDILEFIKQAQARVLSHQDDTALLKAYIVEWRKFFTQCDILPKPFCQLEITLMGKQGSNKKSNVEDSIVRKLMLDTWNESIFSNIKNRLQDSAMKLVHAERLGEAFDSQLVIGVRESYVNLCSNPEDKLQIYRDNFEKAYLDSTERFYRTQAPSYLQQNGVQNYMKYADAKLKEEEKRALRYLETRRECNSVEALMECCVNALVTSFKETILAECQGMIKRNETEKLHLMFSLMDKVPNGIEPMLKDLEEHIISAGLADMVAAAETITTDSEKYVEQLLTLFNRFSKLVKEAFQDDPRFLTARDKAYKAVVNDATIFKLELPLKQKGVGLKTQPESKCPELLANYCDMLLRKTPLSKKLTSEEIEAKLKEVLLVLKYVQNKDVFMRYHKAHLTRRLILDISADSEIEENMVEWLREVGMPADYVNKLARMFQDIKVSEDLNQAFKEMHKNNKLALPADSVNIKILNAGAWSRSSEKVFVSLPTELEDLIPEVEEFYKKNHSGRKLHWHHLMSNGIITFKNEVGQYDLEVTTFQLAVLFAWNQRPREKISFENLKLATELPDAELRRTLWSLVAFPKLKRQVLLYEPQVNSPKDFTEGTLFSVNQEFSLIKNAKVQKRGKINLIGRLQLTTERMREEENEGIVQLRILRTRKLYIQIMKMRKKISNAQLQTELVEILKNMFLPQKKMIKEQIEWLIEHKYIRRDESDINTFIYMA.

Ser-34 bears the Phosphoserine mark. At Thr-210 the chain carries Phosphothreonine. The Cullin neddylation domain maps to 713-772 (LRTRKLYIQIMKMRKKISNAQLQTELVEILKNMFLPQKKMIKEQIEWLIEHKYIRRDESD). Residue Lys-724 forms a Glycyl lysine isopeptide (Lys-Gly) (interchain with G-Cter in NEDD8) linkage.

It belongs to the cullin family. In terms of assembly, component of multiple cullin-5-RING E3 ubiquitin-protein ligase complexes (ECS complexes, also named CRL5 complexes) formed of CUL5, Elongin BC (ELOB and ELOC), RNF7/RBX2 and a variable SOCS box domain-containing protein as substrate-specific recognition component. CUL5-containing ECS complexes specifically contain RNF7/RBX2, and not RBX1, as catalytic subunit. Component of the ECS(ASB2) complex with the substrate recognition component ASB2. Component of the ECS(ASB6) complex with the substrate recognition component ASB6. Component of the ECS(ASB7) complex with the substrate recognition component ASB7. Component of the ECS(ASB9) complex with the substrate recognition component ASB9. Component of the ECS(ASB11) complex with the substrate recognition component ASB11. Component of the ECS(ASB12) complex with the substrate recognition component ASB12. Component of the ECS(LRRC41) complex with the substrate recognition component LRRC41. Component of the ECS(SOCS1) complex with the substrate recognition component SOCS1. Component of the ECS(SOCS2) complex with the substrate recognition component SOCS2. Component of the ECS(WSB1) complex with the substrate recognition subunit WSB1. Component of the ECS(SOCS3) complex with the substrate recognition component SOCS3. Component of the ECS(SOCS7) complex with the substrate recognition component SOCS7. Component of the ECS(SPSB1) complex with the substrate recognition component SPSB1. Component of the ECS(SPSB3) complex with the substrate recognition component SPSB3. Component of the ECS(SPSB2) complex with the substrate recognition component SPSB2. Component of the ECS(SPSB4) complex with the substrate recognition component SPSB4. Component of the ECS(RAB40) complex with the substrate recognition subunit RAB40A, RAB40B or RAB40C. Component of the ECS(KLHDC1) complex with the substrate recognition component KLHDC1. Component of the ECS(PCMTD1) complex with the substrate recognition subunit PCMTD1. May also form complexes containing RBX1 and ELOA or VHL; additional evidence is however required to confirm this result in vivo. Interacts (when neddylated) with ARIH2; leading to activate the E3 ligase activity of ARIH2. Interacts with ERCC6; the interaction is induced by DNA damaging agents or inhibitors of RNA polymerase II elongation. Interacts with ELOA (via the BC-box). Interacts (unneddylated form) with DCUN1D1, DCUN1D2, DCUN1D3, DCUN1D4 and DCUN1D5; these interactions promote the cullin neddylation. Post-translationally, neddylated; which enhances the ubiquitination activity of ECS complexes and prevents binding of the inhibitor CAND1. Deneddylated via its interaction with the COP9 signalosome (CSN). As to expression, kidney collecting tubules.

The protein localises to the nucleus. It functions in the pathway protein modification; protein ubiquitination. Functionally, core component of multiple cullin-5-RING E3 ubiquitin-protein ligase complexes (ECS complexes, also named CRL5 complexes), which mediate the ubiquitination and subsequent proteasomal degradation of target proteins. Acts a scaffold protein that contributes to catalysis through positioning of the substrate and the ubiquitin-conjugating enzyme. The functional specificity of the E3 ubiquitin-protein ligase complex depends on the variable SOCS box-containing substrate recognition component. Acts as a key regulator of neuron positioning during cortex development: component of various SOCS-containing ECS complexes, such as the ECS(SOCS7) complex, that regulate reelin signaling by mediating ubiquitination and degradation of DAB1. ECS(SOCS1) seems to direct ubiquitination of JAK2. The ECS(SOCS2) complex mediates the ubiquitination and subsequent proteasomal degradation of phosphorylated EPOR and GHR. The ECS(SPSB3) complex catalyzes ubiquitination of nuclear CGAS. ECS(KLHDC1) complex is part of the DesCEND (destruction via C-end degrons) pathway and mediates ubiquitination and degradation of truncated SELENOS selenoprotein produced by failed UGA/Sec decoding, which ends with a glycine. The ECS(ASB9) complex mediates ubiquitination and degradation of CKB. As part of some ECS complex, promotes 'Lys-11'-linked ubiquitination and degradation of BTRC. As part of a multisubunit ECS complex, polyubiquitinates monoubiquitinated POLR2A. As part of the ECS(RAB40C) complex, mediates ANKRD28 ubiquitination and degradation, thereby regulating protein phosphatase 6 (PP6) complex activity and focal adhesion assembly during cell migration. As part of the ECS(RAB40A) complex, mediates RHOU 'Lys-48'-linked ubiquitination and degradation, thus inhibiting focal adhesion disassembly during cell migration. As part of the ECS(RAB40B) complex, mediates LIMA1/EPLIN and RAP2 ubiquitination, thereby regulating actin cytoskeleton dynamics and stress fiber formation during cell migration. May form a cell surface vasopressin receptor. This Oryctolagus cuniculus (Rabbit) protein is Cullin-5 (CUL5).